A 195-amino-acid polypeptide reads, in one-letter code: Inner membrane-spanning protein YciB (195 aa).

The next 5 helical transmembrane spans lie at 34 to 54 (IYGA…ALWL), 65 to 85 (FTLG…EDTF), 88 to 108 (WKAP…HFIG), 131 to 151 (LNIA…YVVF), and 160 to 180 (FKVF…GLFL).

This sequence belongs to the YciB family.

It is found in the cell inner membrane. Functionally, plays a role in cell envelope biogenesis, maintenance of cell envelope integrity and membrane homeostasis. The polypeptide is Inner membrane-spanning protein YciB (Pseudomonas aeruginosa (strain LESB58)).